We begin with the raw amino-acid sequence, 473 residues long: Arginine biosynthesis bifunctional protein ArgJ, mitochondrial (473 aa).

The substrate site is built by T201, K230, T241, E328, N468, and T473. T241 serves as the catalytic Nucleophile.

This sequence belongs to the ArgJ family. As to quaternary structure, heterodimer of an alpha and a beta chain. The alpha and beta chains are autoproteolytically processed from a single precursor protein within the mitochondrion.

Its subcellular location is the mitochondrion matrix. The catalysed reaction is N(2)-acetyl-L-ornithine + L-glutamate = N-acetyl-L-glutamate + L-ornithine. It catalyses the reaction L-glutamate + acetyl-CoA = N-acetyl-L-glutamate + CoA + H(+). The protein operates within amino-acid biosynthesis; L-arginine biosynthesis; L-ornithine and N-acetyl-L-glutamate from L-glutamate and N(2)-acetyl-L-ornithine (cyclic): step 1/1. Its pathway is amino-acid biosynthesis; L-arginine biosynthesis; N(2)-acetyl-L-ornithine from L-glutamate: step 1/4. Catalyzes two activities which are involved in the cyclic version of arginine biosynthesis: the synthesis of acetylglutamate from glutamate and acetyl-CoA, and of ornithine by transacetylation between acetylornithine and glutamate. The polypeptide is Arginine biosynthesis bifunctional protein ArgJ, mitochondrial (Ajellomyces capsulatus (strain H143) (Darling's disease fungus)).